Reading from the N-terminus, the 550-residue chain is CTP synthase (550 aa).

Residues 1–270 (MTKFVFVTGG…DRLICEELRL (270 aa)) form an amidoligase domain region. A CTP-binding site is contributed by Ser13. Ser13 lines the UTP pocket. ATP-binding positions include 14-19 (SLGKGI) and Asp71. Residues Asp71 and Glu144 each coordinate Mg(2+). Residues 151-153 (DIE), 191-196 (KTKPTQ), and Lys227 contribute to the CTP site. UTP contacts are provided by residues 191-196 (KTKPTQ) and Lys227. One can recognise a Glutamine amidotransferase type-1 domain in the interval 295–547 (TIGMVGKYVD…VEAALASQQR (253 aa)). Residue Gly356 participates in L-glutamine binding. Cys383 (nucleophile; for glutamine hydrolysis) is an active-site residue. L-glutamine is bound by residues 384-387 (LGMQ), Glu407, and Arg473. Residues His520 and Glu522 contribute to the active site.

This sequence belongs to the CTP synthase family. In terms of assembly, homotetramer.

The catalysed reaction is UTP + L-glutamine + ATP + H2O = CTP + L-glutamate + ADP + phosphate + 2 H(+). It carries out the reaction L-glutamine + H2O = L-glutamate + NH4(+). It catalyses the reaction UTP + NH4(+) + ATP = CTP + ADP + phosphate + 2 H(+). Its pathway is pyrimidine metabolism; CTP biosynthesis via de novo pathway; CTP from UDP: step 2/2. Its activity is regulated as follows. Allosterically activated by GTP, when glutamine is the substrate; GTP has no effect on the reaction when ammonia is the substrate. The allosteric effector GTP functions by stabilizing the protein conformation that binds the tetrahedral intermediate(s) formed during glutamine hydrolysis. Inhibited by the product CTP, via allosteric rather than competitive inhibition. Catalyzes the ATP-dependent amination of UTP to CTP with either L-glutamine or ammonia as the source of nitrogen. Regulates intracellular CTP levels through interactions with the four ribonucleotide triphosphates. This chain is CTP synthase, found in Cupriavidus taiwanensis (strain DSM 17343 / BCRC 17206 / CCUG 44338 / CIP 107171 / LMG 19424 / R1) (Ralstonia taiwanensis (strain LMG 19424)).